The chain runs to 282 residues: Dihydropteroate synthase (282 aa).

The Pterin-binding domain maps to 15-267; it reads PHVMGILNVT…DVKETVEAMR (253 aa). Asn22 serves as a coordination point for Mg(2+). Residues Thr62, Asp96, Asn115, Asp185, Lys221, and 255-257 contribute to the (7,8-dihydropterin-6-yl)methyl diphosphate site; that span reads RVH.

It belongs to the DHPS family. Homodimer. It depends on Mg(2+) as a cofactor.

It carries out the reaction (7,8-dihydropterin-6-yl)methyl diphosphate + 4-aminobenzoate = 7,8-dihydropteroate + diphosphate. Its pathway is cofactor biosynthesis; tetrahydrofolate biosynthesis; 7,8-dihydrofolate from 2-amino-4-hydroxy-6-hydroxymethyl-7,8-dihydropteridine diphosphate and 4-aminobenzoate: step 1/2. Its function is as follows. Catalyzes the condensation of para-aminobenzoate (pABA) with 6-hydroxymethyl-7,8-dihydropterin diphosphate (DHPt-PP) to form 7,8-dihydropteroate (H2Pte), the immediate precursor of folate derivatives. The sequence is that of Dihydropteroate synthase (folP) from Shigella flexneri.